Consider the following 499-residue polypeptide: Thioredoxin reductase 1, cytoplasmic (499 aa).

FAD contacts are provided by residues 18–23, 42–43, 58–59, and 63–67; these read IGGGSG, DF, TC, and GCIPK. Cysteines 59 and 64 form a disulfide. K68 carries the post-translational modification N6-succinyllysine. A Phosphotyrosine modification is found at Y131. Residues 131-132 and T161 each bind FAD; that span reads YG. Residues R166, 198–204, 221–222, R226, 226–228, 291–293, and K315 contribute to the NADP(+) site; these read ASYVALE, RS, RGF, and VGR. Y200 serves as a coordination point for FAD. Residues D334, 341-343, and H472 contribute to the FAD site; that span reads ELT. Residue E341 coordinates NADP(+). H472 (proton acceptor) is an active-site residue. Positions 497–498 form a cross-link, cysteinyl-selenocysteine (Cys-Sec); it reads CU. U498 is a non-standard amino acid (selenocysteine).

The protein belongs to the class-I pyridine nucleotide-disulfide oxidoreductase family. As to quaternary structure, homodimer. FAD is required as a cofactor. ISGylated.

The protein localises to the cytoplasm. It carries out the reaction [thioredoxin]-dithiol + NADP(+) = [thioredoxin]-disulfide + NADPH + H(+). The catalysed reaction is H2O2 + NADPH + H(+) = NADP(+) + 2 H2O. Functionally, reduces disulfideprotein thioredoxin (Trx) to its dithiol-containing form. Homodimeric flavoprotein involved in the regulation of cellular redox reactions, growth and differentiation. Contains a selenocysteine residue at the C-terminal active site that is essential for catalysis. Also has reductase activity on hydrogen peroxide (H2O2). The chain is Thioredoxin reductase 1, cytoplasmic from Rattus norvegicus (Rat).